The primary structure comprises 512 residues: uncharacterized protein (512 aa).

Transmembrane regions (helical) follow at residues isoleucine 20–tryptophan 40 and glycine 222–isoleucine 242. The 216-residue stretch at glutamate 297–valine 512 folds into the Histidine kinase domain. A Phosphohistidine; by autocatalysis modification is found at histidine 325.

In terms of processing, autophosphorylated.

It localises to the cell membrane. It catalyses the reaction ATP + protein L-histidine = ADP + protein N-phospho-L-histidine.. In terms of biological role, probable member of the two-component regulatory system SE_0166/SE_0165. May activate SE_0165 by phosphorylation. This is an uncharacterized protein from Staphylococcus epidermidis (strain ATCC 12228 / FDA PCI 1200).